A 234-amino-acid polypeptide reads, in one-letter code: Uridylate kinase (234 aa).

10-11 (GS) serves as a coordination point for ATP. G44 is a UMP binding site. ATP-binding residues include G45 and R49. Residues D66 and 114-120 (ITPAQTT) each bind UMP. ATP contacts are provided by T140, Y146, and D149.

The protein belongs to the UMP kinase family. In terms of assembly, homohexamer.

Its subcellular location is the cytoplasm. It carries out the reaction UMP + ATP = UDP + ADP. The protein operates within pyrimidine metabolism; CTP biosynthesis via de novo pathway; UDP from UMP (UMPK route): step 1/1. With respect to regulation, inhibited by UTP. Functionally, catalyzes the reversible phosphorylation of UMP to UDP. This Methanoculleus marisnigri (strain ATCC 35101 / DSM 1498 / JR1) protein is Uridylate kinase.